A 38-amino-acid chain; its full sequence is Large ribosomal subunit protein bL36 (38 aa).

Belongs to the bacterial ribosomal protein bL36 family.

This is Large ribosomal subunit protein bL36 from Chlorobaculum parvum (strain DSM 263 / NCIMB 8327) (Chlorobium vibrioforme subsp. thiosulfatophilum).